The sequence spans 197 residues: Glycerol-3-phosphate acyltransferase (197 aa).

The next 6 membrane-spanning stretches (helical) occupy residues 1 to 21 (MNIL…GFLI), 50 to 70 (WPAL…VKIA), 77 to 97 (GLIE…PIWL), 111 to 131 (MFLA…LIVL), 136 to 156 (FVSL…FFYL), and 157 to 177 (GNYM…VIWK).

Belongs to the PlsY family. Probably interacts with PlsX.

Its subcellular location is the cell inner membrane. The catalysed reaction is an acyl phosphate + sn-glycerol 3-phosphate = a 1-acyl-sn-glycero-3-phosphate + phosphate. The protein operates within lipid metabolism; phospholipid metabolism. Its function is as follows. Catalyzes the transfer of an acyl group from acyl-phosphate (acyl-PO(4)) to glycerol-3-phosphate (G3P) to form lysophosphatidic acid (LPA). This enzyme utilizes acyl-phosphate as fatty acyl donor, but not acyl-CoA or acyl-ACP. This chain is Glycerol-3-phosphate acyltransferase, found in Prochlorococcus marinus (strain MIT 9312).